A 380-amino-acid polypeptide reads, in one-letter code: GDP-mannose:cellobiosyl-diphosphopolyprenol alpha-mannosyltransferase (380 aa).

This sequence belongs to the glycosyltransferase group 1 family. Glycosyltransferase 4 subfamily.

It carries out the reaction beta-D-Glc-(1-&gt;4)-alpha-D-Glc-di-trans,octa-cis-undecaprenyl diphosphate + GDP-alpha-D-mannose = alpha-D-Man-(1-&gt;3)-beta-D-Glc-(1-&gt;4)-alpha-D-Glc-1-di-trans,octa-cis-undecaprenyl diphosphate + GDP + H(+). Its function is as follows. Involved in the biosynthesis of the exopolysaccharide xanthan, a polymer that is comprised of repeating pentasaccharide units with the structure of a beta-(1,4)-linked D-glucose backbone with trisaccharide side chains composed of mannose-beta-(1,4)-glucuronic acid-beta-(1,2)-mannose attached to alternate glucose residues in the backbone by alpha-(1,3) linkages. Xanthan is involved in pathogenicity but has also been used in a variety of applications as a specialty polymer for commercial applications, including food additives, where they act as viscosifying, stabilizing, emulsifying, or gelling agents. This Xanthomonas campestris protein is GDP-mannose:cellobiosyl-diphosphopolyprenol alpha-mannosyltransferase (gumH).